Reading from the N-terminus, the 228-residue chain is PKHD-type hydroxylase Rmet_3078 (228 aa).

In terms of domain architecture, Fe2OG dioxygenase spans 80-180 (IVYPPMFNRY…RVGCFFWIQS (101 aa)). Histidine 98, aspartate 100, and histidine 161 together coordinate Fe cation. Arginine 171 serves as a coordination point for 2-oxoglutarate.

Requires Fe(2+) as cofactor. The cofactor is L-ascorbate.

In Cupriavidus metallidurans (strain ATCC 43123 / DSM 2839 / NBRC 102507 / CH34) (Ralstonia metallidurans), this protein is PKHD-type hydroxylase Rmet_3078.